A 218-amino-acid polypeptide reads, in one-letter code: Cytidylate kinase (218 aa).

7-15 (GPSASGKSS) serves as a coordination point for ATP.

This sequence belongs to the cytidylate kinase family. Type 1 subfamily.

The protein localises to the cytoplasm. It catalyses the reaction CMP + ATP = CDP + ADP. It carries out the reaction dCMP + ATP = dCDP + ADP. This chain is Cytidylate kinase, found in Borrelia duttonii (strain Ly).